Reading from the N-terminus, the 319-residue chain is Glucokinase (319 aa).

8–13 (GDIGGT) provides a ligand contact to ATP.

This sequence belongs to the bacterial glucokinase family.

Its subcellular location is the cytoplasm. It carries out the reaction D-glucose + ATP = D-glucose 6-phosphate + ADP + H(+). The protein is Glucokinase of Chromohalobacter salexigens (strain ATCC BAA-138 / DSM 3043 / CIP 106854 / NCIMB 13768 / 1H11).